The primary structure comprises 217 residues: MLGEEAEPQWISEEVKTGTTIIAIEFNGGVVLGSDSRVSAGDSVVNRVMNKLSPLHDKIYCALSGSAADAQTIAEMVNYQLDVHSLEIDEDPQVRSAATLVKNISYKYKEELSAHLIVAGWDRRDGGQVFATLGGLLTRQPFAIGGSGSSYVYGFVDAEYRRGMTKEECQKFVVNTLALAMNRDGSSGGVAYIVTIDEHSTDEKVILGNDLPTFFDQ.

Positions 1 to 18 are cleaved as a propeptide — removed in mature form; that stretch reads MLGEEAEPQWISEEVKTG. The active-site Nucleophile is Thr19.

It belongs to the peptidase T1B family. As to quaternary structure, the 26S proteasome consists of a 20S proteasome core and two 19S regulatory subunits. The 20S proteasome core is composed of 28 subunits that are arranged in four stacked rings, resulting in a barrel-shaped structure. The two end rings are each formed by seven alpha subunits, and the two central rings are each formed by seven beta subunits. The catalytic chamber with the active sites is on the inside of the barrel. Component of the immunoproteasome, where it displaces the equivalent housekeeping subunit PSMB6. In terms of processing, autocleaved. The resulting N-terminal Thr residue of the mature subunit is responsible for the nucleophile proteolytic activity.

The protein resides in the cytoplasm. The protein localises to the nucleus. The enzyme catalyses Cleavage of peptide bonds with very broad specificity.. Its function is as follows. The proteasome is a multicatalytic proteinase complex which is characterized by its ability to cleave peptides with Arg, Phe, Tyr, Leu, and Glu adjacent to the leaving group at neutral or slightly basic pH. The proteasome has an ATP-dependent proteolytic activity. This subunit is involved in antigen processing to generate class I binding peptides. The polypeptide is Proteasome subunit beta type-9 (psmb9) (Oryzias latipes (Japanese rice fish)).